We begin with the raw amino-acid sequence, 176 residues long: RNA pyrophosphohydrolase (176 aa).

In terms of domain architecture, Nudix hydrolase spans Pro-8–Lys-159. Positions Gly-47–Ser-68 match the Nudix box motif.

This sequence belongs to the Nudix hydrolase family. RppH subfamily. A divalent metal cation is required as a cofactor.

Functionally, accelerates the degradation of transcripts by removing pyrophosphate from the 5'-end of triphosphorylated RNA, leading to a more labile monophosphorylated state that can stimulate subsequent ribonuclease cleavage. The sequence is that of RNA pyrophosphohydrolase from Rhodopseudomonas palustris (strain BisA53).